A 1014-amino-acid chain; its full sequence is MRRNKTTYSLLQTILVACLLTVTPTFASNKPTTDESGTISHTICDGEAAELSCPAGKVISIVLGNYGRFSVAVCLPDNDIVPSNINCQNHKTKSILEKKCNGDSMCYFTVDKKTFTEDPCPNTPKYLEVKYNCVVPATTTTTTTTTSTTTTDSSLIVDEEEEAQKDALNSDVIKPVKKKEDVFCSATNRRGVNWQNTKSGTTSSAPCPEGSSGKQLWACTEEGQWLTEFPNSAGCESNWISSRNSVLSGVISSEDVSGLPEFLRNLGSETRRPMVGGDLPKVLHLLEKTVNVIAEESWAYQHLPLSNKGAVEVMNYMLRNQEIWGSWDVTKRKEFASRFILAAEKAMVASAKGMMTSAESNVIVQPAITVEISHKIKMSSQPTDYILFPSAALWNGQNVDNVNIPRDAILKINKDETQVFFSSFDNLGAQMTPSDVTVAIAGTDQTEVRKRRVVSRIVGASLIENGKERRVENLTQPVRITFYHKESSVRHLSNPTCVWWNHHELKWKPSGCKLSYHNKTMTSCDCTHLTHFAVLMDVRGHDLNEIDQTLLTLLTYVGCIISIICLLLTFFAYLIFSRNGGDRVFIHENLCLSLAIAEITFLAGITRTEDSLQCGIIAVALMYMFLSALTWMLLEGYHIHRMLTEVFPSDPRRFTYLLVGYIPPAIITLVAYLYNSDGFGTPDHCWLSTQNNFIWFFAGPACFIFCANSLVLVKTLCTVYQHTSGGYLPCRHDVDSGRSIRNWVKGSLALASLLGVTWIFGLFWVEDSRSIVMAYVFTISNSLQGLFIFLFHVVFAEKMRKDVGHWMYRRGCGGSSNSSPNHKRHNVQRDLMSPGVNSSTGSDFLYNTNDKYLTNSDTTNRLVYNGIMNHPNQMSVYQQHPHHQIYEQQPGTYDYATIAYGDMMPGHRVAAPPAYQRLAVAEGRYGSQHQLYQGWHHRPPPEFSPPPPPLSTGPPNSRHYGTGSSGRRPPSSKMSDDSAYSDGSSSMLTTEVTPQGQTVLRIDLNKPSMYCQDL.

Residues 1-27 (MRRNKTTYSLLQTILVACLLTVTPTFA) form the signal peptide. Asn4 carries N-linked (GlcNAc...) asparagine glycosylation. The Extracellular segment spans residues 28-555 (SNKPTTDESG…IDQTLLTLLT (528 aa)). In terms of domain architecture, SUEL-type lectin spans 43 to 134 (ICDGEAAELS…KYLEVKYNCV (92 aa)). A GAIN-B domain is found at 359 to 542 (ESNVIVQPAI…AVLMDVRGHD (184 aa)). Residues Asn473 and Asn518 are each glycosylated (N-linked (GlcNAc...) asparagine). Cystine bridges form between Cys497-Cys524 and Cys512-Cys526. The interval 497 to 542 (CVWWNHHELKWKPSGCKLSYHNKTMTSCDCTHLTHFAVLMDVRGHD) is GPS. Residues 556–576 (YVGCIISIICLLLTFFAYLIF) traverse the membrane as a helical segment. Residues 577 to 584 (SRNGGDRV) are Cytoplasmic-facing. Residues 585-605 (FIHENLCLSLAIAEITFLAGI) traverse the membrane as a helical segment. The Extracellular portion of the chain corresponds to 606-613 (TRTEDSLQ). Residues 614-634 (CGIIAVALMYMFLSALTWMLL) form a helical membrane-spanning segment. Residues 635–653 (EGYHIHRMLTEVFPSDPRR) lie on the Cytoplasmic side of the membrane. The helical transmembrane segment at 654-674 (FTYLLVGYIPPAIITLVAYLY) threads the bilayer. Topologically, residues 675-692 (NSDGFGTPDHCWLSTQNN) are extracellular. Residues 693 to 713 (FIWFFAGPACFIFCANSLVLV) traverse the membrane as a helical segment. Residues 714 to 745 (KTLCTVYQHTSGGYLPCRHDVDSGRSIRNWVK) are Cytoplasmic-facing. A helical membrane pass occupies residues 746–766 (GSLALASLLGVTWIFGLFWVE). The Extracellular segment spans residues 767-770 (DSRS). Residues 771 to 791 (IVMAYVFTISNSLQGLFIFLF) traverse the membrane as a helical segment. Topologically, residues 792–1014 (HVVFAEKMRK…NKPSMYCQDL (223 aa)) are cytoplasmic. 2 disordered regions span residues 814–833 (GSSN…DLMS) and 932–994 (YQGW…EVTP). Positions 941-952 (PEFSPPPPPLST) are enriched in pro residues. The segment covering 965-986 (SGRRPPSSKMSDDSAYSDGSSS) has biased composition (low complexity).

The protein belongs to the G-protein coupled receptor 2 family. LN-TM7 subfamily. In terms of assembly, monomer and homodimer. Post-translationally, autoproteolytically processed at the GPS region of the GAIN-B domain; this cleavage modulates receptor activity. In terms of tissue distribution, expressed in epidermal precursor cells and pharyngeal primordium. In adults expression is seen in pharyngeal muscle cells and nervous system, the nerve ring, the gonad, and the vulva.

The protein resides in the cell membrane. Its function is as follows. Has a role in the establishment of anterior-posterior polarity in tissues during embryogenesis. Required for the alignment of the mitotic spindles and division planes. May have a role in cell death events. Required for normal defection and oocyte fertilization. Involved in sperm function. Operates in pharyngeal pumping during feeding. This Caenorhabditis elegans protein is Latrophilin-like protein 1.